A 62-amino-acid chain; its full sequence is SPbeta prophage-derived uncharacterized protein YonU (62 aa).

Positions 1-32 (MEKKFLDAIQQLTKELEMLKKDIDSIKEATVR) form a coiled coil.

This is SPbeta prophage-derived uncharacterized protein YonU (yonU) from Bacillus subtilis (strain 168).